We begin with the raw amino-acid sequence, 119 residues long: MQAKAILRHTPTSPRKMRLVAGLVRGKRVDQAKAILHNSTKSASRNVMVTLKSAVANWSQLNPDERLNDNELFVKAIFVDEGPSLKRLLPAPMGRAYRIRKRSNHLTIVVDKVENKVTK.

This sequence belongs to the universal ribosomal protein uL22 family. In terms of assembly, part of the 50S ribosomal subunit.

This protein binds specifically to 23S rRNA; its binding is stimulated by other ribosomal proteins, e.g. L4, L17, and L20. It is important during the early stages of 50S assembly. It makes multiple contacts with different domains of the 23S rRNA in the assembled 50S subunit and ribosome. In terms of biological role, the globular domain of the protein is located near the polypeptide exit tunnel on the outside of the subunit, while an extended beta-hairpin is found that lines the wall of the exit tunnel in the center of the 70S ribosome. This Chlorobaculum tepidum (strain ATCC 49652 / DSM 12025 / NBRC 103806 / TLS) (Chlorobium tepidum) protein is Large ribosomal subunit protein uL22.